The sequence spans 948 residues: Bifunctional glutamine synthetase adenylyltransferase/adenylyl-removing enzyme (948 aa).

Positions 1–447 (MLTPDNKLMS…EFQQVVGAES (447 aa)) are adenylyl removase. The segment at 453-948 (EQGLQVLWQD…NCWNHLLEDD (496 aa)) is adenylyl transferase.

This sequence belongs to the GlnE family. The cofactor is Mg(2+).

The catalysed reaction is [glutamine synthetase]-O(4)-(5'-adenylyl)-L-tyrosine + phosphate = [glutamine synthetase]-L-tyrosine + ADP. It catalyses the reaction [glutamine synthetase]-L-tyrosine + ATP = [glutamine synthetase]-O(4)-(5'-adenylyl)-L-tyrosine + diphosphate. Involved in the regulation of glutamine synthetase GlnA, a key enzyme in the process to assimilate ammonia. When cellular nitrogen levels are high, the C-terminal adenylyl transferase (AT) inactivates GlnA by covalent transfer of an adenylyl group from ATP to specific tyrosine residue of GlnA, thus reducing its activity. Conversely, when nitrogen levels are low, the N-terminal adenylyl removase (AR) activates GlnA by removing the adenylyl group by phosphorolysis, increasing its activity. The regulatory region of GlnE binds the signal transduction protein PII (GlnB) which indicates the nitrogen status of the cell. The chain is Bifunctional glutamine synthetase adenylyltransferase/adenylyl-removing enzyme from Idiomarina loihiensis (strain ATCC BAA-735 / DSM 15497 / L2-TR).